The chain runs to 103 residues: Acylphosphatase-2 (103 aa).

Serine 2 carries the post-translational modification N-acetylserine. An Acylphosphatase-like domain is found at 13 to 103 (SVDYEVFGRV…LDFSGFSTRY (91 aa)). Catalysis depends on residues arginine 28 and asparagine 46.

This sequence belongs to the acylphosphatase family.

It carries out the reaction an acyl phosphate + H2O = a carboxylate + phosphate + H(+). Functionally, its physiological role is not yet clear. This Gallus gallus (Chicken) protein is Acylphosphatase-2 (ACYP2).